Consider the following 119-residue polypeptide: Large ribosomal subunit protein bL19 (119 aa).

This sequence belongs to the bacterial ribosomal protein bL19 family.

In terms of biological role, this protein is located at the 30S-50S ribosomal subunit interface and may play a role in the structure and function of the aminoacyl-tRNA binding site. This chain is Large ribosomal subunit protein bL19, found in Pediococcus pentosaceus (strain ATCC 25745 / CCUG 21536 / LMG 10740 / 183-1w).